We begin with the raw amino-acid sequence, 377 residues long: Chaperone protein DnaJ (377 aa).

The 66-residue stretch at Asp5–Gly70 folds into the J domain. The CR-type zinc finger occupies Gly137 to Gln215. Positions 150, 153, 167, 170, 189, 192, 203, and 206 each coordinate Zn(2+). CXXCXGXG motif repeat units follow at residues Cys150 to Gly157, Cys167 to Gly174, Cys189 to Gly196, and Cys203 to Gly210.

Belongs to the DnaJ family. Homodimer. It depends on Zn(2+) as a cofactor.

It localises to the cytoplasm. Functionally, participates actively in the response to hyperosmotic and heat shock by preventing the aggregation of stress-denatured proteins and by disaggregating proteins, also in an autonomous, DnaK-independent fashion. Unfolded proteins bind initially to DnaJ; upon interaction with the DnaJ-bound protein, DnaK hydrolyzes its bound ATP, resulting in the formation of a stable complex. GrpE releases ADP from DnaK; ATP binding to DnaK triggers the release of the substrate protein, thus completing the reaction cycle. Several rounds of ATP-dependent interactions between DnaJ, DnaK and GrpE are required for fully efficient folding. Also involved, together with DnaK and GrpE, in the DNA replication of plasmids through activation of initiation proteins. The protein is Chaperone protein DnaJ of Cupriavidus taiwanensis (strain DSM 17343 / BCRC 17206 / CCUG 44338 / CIP 107171 / LMG 19424 / R1) (Ralstonia taiwanensis (strain LMG 19424)).